Reading from the N-terminus, the 558-residue chain is Trehalase 1 (558 aa).

This sequence belongs to the glycosyl hydrolase 15 family.

The catalysed reaction is alpha,alpha-trehalose + H2O = alpha-D-glucose + beta-D-glucose. It participates in glycan degradation; trehalose degradation; D-glucose from alpha,alpha-trehalose: step 1/1. In terms of biological role, catalyzes the hydrolysis of alpha,alpha-trehalose into two molecules of D-glucose. This is Trehalase 1 (treH1) from Sulfolobus acidocaldarius (strain ATCC 33909 / DSM 639 / JCM 8929 / NBRC 15157 / NCIMB 11770).